A 1568-amino-acid chain; its full sequence is Plexin-C1 (1568 aa).

Positions 1 to 34 (MEVSRRKAPPRPPRPAAPLPLLAYLLALAAPGRG) are cleaved as a signal peptide. Positions 35–452 (ADEPVWRSEQ…AGKEVRRIRV (418 aa)) constitute a Sema domain. The Extracellular segment spans residues 35–944 (ADEPVWRSEQ…YVEQESVPST (910 aa)). C64 and C87 are disulfide-bonded. N-linked (GlcNAc...) asparagine glycosylation is found at N86, N141, and N149. 3 cysteine pairs are disulfide-bonded: C156–C194, C226–C354, and C283–C329. Residues N241 and N252 are each glycosylated (N-linked (GlcNAc...) asparagine). N386 and N407 each carry an N-linked (GlcNAc...) asparagine glycan. 4 disulfides stabilise this stretch: C455-C472, C461-C506, C464-C481, and C475-C487. N-linked (GlcNAc...) asparagine glycosylation is found at N548, N582, N653, N692, N771, N796, N821, N871, and N890. Residues 945–965 (WYFLIVLPVLLVIVIFAAVGV) form a helical membrane-spanning segment. Topologically, residues 966-1568 (TRHKSKELSR…FDEKKKCKWM (603 aa)) are cytoplasmic. Phosphoserine is present on S978.

The protein belongs to the plexin family. As to quaternary structure, monomer. Homodimer. Interacts with SEMA7A. N-glycosylated. Detected in heart, brain, lung, spleen and placenta.

It localises to the membrane. Functionally, receptor for SEMA7A, for smallpox semaphorin A39R, vaccinia virus semaphorin A39R and for herpesvirus Sema protein. Binding of semaphorins triggers cellular responses leading to the rearrangement of the cytoskeleton and to secretion of IL6 and IL8. This chain is Plexin-C1 (PLXNC1), found in Homo sapiens (Human).